The sequence spans 416 residues: Tyrosine--tRNA ligase (416 aa).

Positions 55–64 match the 'HIGH' region motif; sequence PTGSEIHLGH. The 'KMSKS' region signature appears at 249-253; sequence KMSKS. Lys252 is a binding site for ATP. Residues 352–416 form the S4 RNA-binding domain; sequence TKAFHLLSSI…GKKTFRRISN (65 aa).

The protein belongs to the class-I aminoacyl-tRNA synthetase family. TyrS type 2 subfamily. As to quaternary structure, homodimer.

Its subcellular location is the cytoplasm. The catalysed reaction is tRNA(Tyr) + L-tyrosine + ATP = L-tyrosyl-tRNA(Tyr) + AMP + diphosphate + H(+). In terms of biological role, catalyzes the attachment of tyrosine to tRNA(Tyr) in a two-step reaction: tyrosine is first activated by ATP to form Tyr-AMP and then transferred to the acceptor end of tRNA(Tyr). This Prochlorococcus marinus (strain SARG / CCMP1375 / SS120) protein is Tyrosine--tRNA ligase.